A 757-amino-acid polypeptide reads, in one-letter code: Cell cycle progression protein 1 (757 aa).

Over 1–217 (MSENSSDSDS…KRQFSSGLNK (217 aa)) the chain is Cytoplasmic. Residues 1–308 (MSENSSDSDS…QKTNLATENQ (308 aa)) are interaction with MCF2L and SRC. A disordered region spans residues 152–207 (VFSSQPSDDESSSDETSNQPSPAFRRRRARKKTVSASESEDRLVAEQETEPSKELS). Basic residues predominate over residues 175 to 184 (FRRRRARKKT). The residue at position 186 (S186) is a Phosphoserine. Basic and acidic residues predominate over residues 190–207 (SEDRLVAEQETEPSKELS). Residues 218 to 238 (CVILALVIAISMGFGHFYGTI) traverse the membrane as a helical; Signal-anchor for type II membrane protein segment. Residues 239-757 (QIQKRQQLVR…YIKPCHYSSL (519 aa)) lie on the Lumenal side of the membrane. Coiled-coil stretches lie at residues 248-272 (RKIH…QESF) and 306-450 (ENQY…LWER). Positions 458–468 (QNGKQGTDGKK) are enriched in basic and acidic residues. Positions 458 to 483 (QNGKQGTDGKKKGGRGSHRAKNKSKE) are disordered. The span at 469–479 (KGGRGSHRAKN) shows a compositional bias: basic residues. Positions 504 to 530 (VRHHKEKIKQAKEAVKENLKKFSDSVK) form a coiled coil.

It belongs to the CCPG1 family. In terms of assembly, interacts with MCF2L. May interact with MCF2, ARHGEF1, BCR, VAV1 and FGD1, but not with TIAM1. Interacts with GTP-bound CDC42 and SRC.

It is found in the cytoplasmic granule membrane. In terms of biological role, acts as an assembly platform for Rho protein signaling complexes. Limits guanine nucleotide exchange activity of MCF2L toward RHOA, which results in an inhibition of both its transcriptional activation ability and its transforming activity. Does not inhibit activity of MCF2L toward CDC42, or activity of MCF2 toward either RHOA or CDC42. May be involved in cell cycle regulation. The chain is Cell cycle progression protein 1 (CCPG1) from Homo sapiens (Human).